Consider the following 357-residue polypeptide: Fructose-1,6-bisphosphatase class 1 2 (357 aa).

Mg(2+)-binding residues include Glu-90, Asp-112, Leu-114, and Asp-115. Substrate-binding positions include 115–118 (DGSS) and Asn-206. Glu-278 serves as a coordination point for Mg(2+).

The protein belongs to the FBPase class 1 family. In terms of assembly, homotetramer. Requires Mg(2+) as cofactor.

The protein resides in the cytoplasm. It catalyses the reaction beta-D-fructose 1,6-bisphosphate + H2O = beta-D-fructose 6-phosphate + phosphate. Its pathway is carbohydrate biosynthesis; gluconeogenesis. The chain is Fructose-1,6-bisphosphatase class 1 2 from Dechloromonas aromatica (strain RCB).